Consider the following 449-residue polypeptide: Tubulin alpha chain (449 aa).

Residues 1-4 carry the MREC motif motif; that stretch reads MREC. A GTP-binding site is contributed by Gln11. Lys40 carries the post-translational modification N6-acetyllysine. The GTP site is built by Glu71, Ser140, Gly144, Thr145, Thr179, Asn206, and Asn228. Residue Glu71 participates in Mg(2+) binding. Residue Glu254 is part of the active site. Glu443 carries the post-translational modification 5-glutamyl polyglutamate.

It belongs to the tubulin family. As to quaternary structure, dimer of alpha and beta chains. A typical microtubule is a hollow water-filled tube with an outer diameter of 25 nm and an inner diameter of 15 nM. Alpha-beta heterodimers associate head-to-tail to form protofilaments running lengthwise along the microtubule wall with the beta-tubulin subunit facing the microtubule plus end conferring a structural polarity. Microtubules usually have 13 protofilaments but different protofilament numbers can be found in some organisms and specialized cells. Requires Mg(2+) as cofactor. In terms of processing, some glutamate residues at the C-terminus are polyglycylated, resulting in polyglycine chains on the gamma-carboxyl group. Glycylation is mainly limited to tubulin incorporated into axonemes (cilia and flagella) whereas glutamylation is prevalent in neuronal cells, centrioles, axonemes, and the mitotic spindle. Both modifications can coexist on the same protein on adjacent residues, and lowering polyglycylation levels increases polyglutamylation, and reciprocally. The precise function of polyglycylation is still unclear. Some glutamate residues at the C-terminus are polyglutamylated, resulting in polyglutamate chains on the gamma-carboxyl group. Polyglutamylation plays a key role in microtubule severing by spastin (SPAST). SPAST preferentially recognizes and acts on microtubules decorated with short polyglutamate tails: severing activity by SPAST increases as the number of glutamates per tubulin rises from one to eight, but decreases beyond this glutamylation threshold. Post-translationally, acetylation of alpha chains at Lys-40 is located inside the microtubule lumen. This modification has been correlated with increased microtubule stability, intracellular transport and ciliary assembly. In terms of processing, undergoes a tyrosination/detyrosination cycle, the cyclic removal and re-addition of a C-terminal tyrosine residue by the enzymes tubulin tyrosine carboxypeptidase (MATCAP1, VASH1 or VASH2) and tubulin tyrosine ligase (TTL), respectively. Tyrosination promotes microtubule interaction with CAP-Gly microtubule plus-end tracking proteins. Tyrosinated tubulins regulate the initiation of dynein-driven motility. Post-translationally, detyrosination is involved in metaphase plate congression by guiding chromosomes during mitosis. Detyrosination increases microtubules-dependent mechanotransduction in dystrophic cardiac and skeletal muscle. In cardiomyocytes, detyrosinated microtubules are required to resist to contractile compression during contraction.

The protein resides in the cytoplasm. It localises to the cytoskeleton. The enzyme catalyses GTP + H2O = GDP + phosphate + H(+). In terms of biological role, tubulin is the major constituent of microtubules, a cylinder consisting of laterally associated linear protofilaments composed of alpha- and beta-tubulin heterodimers. Microtubules grow by the addition of GTP-tubulin dimers to the microtubule end, where a stabilizing cap forms. Below the cap, tubulin dimers are in GDP-bound state, owing to GTPase activity of alpha-tubulin. The sequence is that of Tubulin alpha chain (tuba) from Xenopus tropicalis (Western clawed frog).